The chain runs to 140 residues: C-type lectin 6 (140 aa).

A signal peptide spans 1-23 (MGRLVFVSFGLLVVFLSLSGTGA). Cystine bridges form between Cys25-Cys36, Cys53-Cys138, and Cys115-Cys130. Positions 32–139 (YEGHCYRVFQ…CSKTHNVICK (108 aa)) constitute a C-type lectin domain.

It belongs to the snaclec family. Heteromultimer; disulfide-linked. Expressed by the venom gland.

The protein localises to the secreted. Interferes with one step of hemostasis (modulation of platelet aggregation, or coagulation cascade, for example). The polypeptide is C-type lectin 6 (Crotalus adamanteus (Eastern diamondback rattlesnake)).